We begin with the raw amino-acid sequence, 453 residues long: Magnesium transporter MgtE (453 aa).

Over 1-286 (MNEGQEMEEQ…ENPLKAASKR (286 aa)) the chain is Cytoplasmic. 11 residues coordinate Mg(2+): glutamate 71, aspartate 98, aspartate 102, glutamate 136, alanine 140, tyrosine 176, arginine 227, aspartate 230, alanine 233, aspartate 251, and glutamate 259. CBS domains lie at 142–205 (MTTE…IADI) and 206–262 (LNER…EAAS). A helical transmembrane segment spans residues 287-307 (LPWLITLLFLGMSTASLISNY). Glutamate 308 is a topological domain (extracellular). A helical transmembrane segment spans residues 309–329 (SLVSEASILAVFISLITGTAG). At 330 to 360 (NAGTQSLAVAVRRLAMKDEKDSNFGRLILSE) the chain is on the cytoplasmic side. The helical transmembrane segment at 361-381 (VLTGLVTGAVTGLTIMIVVGV) threads the bilayer. Residues 382 to 389 (WQHNLPLG) lie on the Extracellular side of the membrane. Residues 390 to 410 (FVIGMAMLCAITVANLAGSLI) form a helical membrane-spanning segment. Topologically, residues 411–427 (PMLMDKLGFDPAVASGP) are cytoplasmic. A helical transmembrane segment spans residues 428-448 (FITTLSDLTSVLIYFNIASMF). Residue aspartate 434 coordinates Mg(2+). Residues 449–453 (MRYFV) are Extracellular-facing.

This sequence belongs to the SLC41A transporter family. As to quaternary structure, homodimer.

Its subcellular location is the cell membrane. It catalyses the reaction Mg(2+)(in) = Mg(2+)(out). Functionally, acts as a magnesium transporter. The polypeptide is Magnesium transporter MgtE (Enterococcus faecalis (strain ATCC 700802 / V583)).